The chain runs to 212 residues: Outer-membrane lipoprotein LolB (212 aa).

An N-terminal signal peptide occupies residues 1-16 (MACRSWVLGILLVLVG). Residue Cys-17 is the site of N-palmitoyl cysteine attachment. Cys-17 carries S-diacylglycerol cysteine lipidation.

It belongs to the LolB family. In terms of assembly, monomer.

It is found in the cell outer membrane. Plays a critical role in the incorporation of lipoproteins in the outer membrane after they are released by the LolA protein. The polypeptide is Outer-membrane lipoprotein LolB (Nitrosomonas europaea (strain ATCC 19718 / CIP 103999 / KCTC 2705 / NBRC 14298)).